The chain runs to 170 residues: Urease accessory protein UreE (170 aa).

This sequence belongs to the UreE family.

The protein resides in the cytoplasm. Involved in urease metallocenter assembly. Binds nickel. Probably functions as a nickel donor during metallocenter assembly. In Helicobacter pylori (strain ATCC 700392 / 26695) (Campylobacter pylori), this protein is Urease accessory protein UreE.